A 195-amino-acid chain; its full sequence is PRELI domain containing protein 3B (195 aa).

The PRELI/MSF1 domain maps to 1-172 (MKIWTSEHVF…VIHKLNAEIE (172 aa)). Serine 46 and serine 51 each carry phosphoserine.

This sequence belongs to the slowmo family.

The sequence is that of PRELI domain containing protein 3B (PRELID3B) from Cricetulus griseus (Chinese hamster).